Consider the following 527-residue polypeptide: MSYPLEEVNKRRTFAIISHPDAGKTTITEKVLLYGNAIQTAGSVKGKGSAAHAKSDWMEMEKQRGISITTSVMQFPYNNCLVNLLDTPGHEDFSEDTYRTLTAVDSCLMVIDSAKGVEERTIKLMEVTRLRDTPIITFMNKLDRDIRDPMELLDEVENVLKIRCAPITWPIGCGKLFKGVYHLAKDETYLYQSGQGSTIQAVRVVKGLNNPELDVAVGDDLAQQLRDELELVQGASNEFEQDAFIKGELTPVFFGTALGNFGVDHFLDGLTQWAPKPQSRQADTRTVESAEEKFSGFVFKIQANMDPKHRDRVAFMRVVSGKYEKGMKLKHVRIGKDVVISDALTFMAGDRAHAEEAYAGDIIGLHNHGTIQIGDTFTQGETLKFTGIPNFAPELFRRIRLKDPLKQKQLLKGLVQLSEEGAVQVFRPLLNNDLIVGAVGVLQFDVVVSRLKTEYNVEAIYENVNVATARWVECADGKKFEEFKRKNEQNLALDGGDNLTYIAPTMVNLNLAQERYPDVVFYKTREH.

Residues 9–278 (NKRRTFAIIS…GLTQWAPKPQ (270 aa)) enclose the tr-type G domain. GTP is bound by residues 18 to 25 (SHPDAGKT), 86 to 90 (DTPGH), and 140 to 143 (NKLD).

Belongs to the TRAFAC class translation factor GTPase superfamily. Classic translation factor GTPase family. PrfC subfamily.

It is found in the cytoplasm. In terms of biological role, increases the formation of ribosomal termination complexes and stimulates activities of RF-1 and RF-2. It binds guanine nucleotides and has strong preference for UGA stop codons. It may interact directly with the ribosome. The stimulation of RF-1 and RF-2 is significantly reduced by GTP and GDP, but not by GMP. The sequence is that of Peptide chain release factor 3 from Haemophilus influenzae (strain 86-028NP).